Consider the following 780-residue polypeptide: Aconitate hydratase, mitochondrial (780 aa).

Residues 1–27 (MAPYSLLVSRLQKALGARQYHVASVLC) constitute a mitochondrion transit peptide. Lys31 is modified (N6-succinyllysine). Lys50 is modified (N6-acetyllysine; alternate). Lys50 carries the N6-succinyllysine; alternate modification. Gln99 is a binding site for substrate. N6-acetyllysine; alternate occurs at positions 138 and 144. N6-succinyllysine; alternate is present on residues Lys138 and Lys144. A substrate-binding site is contributed by 192–194 (DSH). At Lys233 the chain carries N6-acetyllysine; alternate. Lys233 bears the N6-succinyllysine; alternate mark. [4Fe-4S] cluster is bound at residue Cys385. Residue Lys411 is modified to N6-succinyllysine. [4Fe-4S] cluster contacts are provided by Cys448 and Cys451. Residues Arg474 and Arg479 each coordinate substrate. Residues Lys517 and Lys523 each carry the N6-acetyllysine; alternate modification. N6-succinyllysine; alternate occurs at positions 517 and 523. Residues 524–537 (LEAPDADELPRAEF) are compositionally biased toward basic and acidic residues. Residues 524 to 560 (LEAPDADELPRAEFDPGQDTYQHPPKDSSGQQVDVSP) are disordered. The residue at position 549 (Lys549) is an N6-succinyllysine. Polar residues predominate over residues 551 to 560 (SSGQQVDVSP). Ser559 carries the phosphoserine modification. An N6-acetyllysine; alternate modification is found at Lys573. Lys573 carries the N6-succinyllysine; alternate modification. Lys591 carries the post-translational modification N6-succinyllysine. Residue Lys605 is modified to N6-acetyllysine; alternate. Position 605 is an N6-succinyllysine; alternate (Lys605). Arg607 is a substrate binding site. Residue Lys628 is modified to N6-succinyllysine. A Phosphoserine modification is found at Ser670. Residue 670–671 (SR) participates in substrate binding. Residue Lys689 is modified to N6-succinyllysine. An N6-acetyllysine; alternate mark is found at Lys723 and Lys730. N6-succinyllysine; alternate occurs at positions 723 and 730. N6-acetyllysine occurs at positions 736 and 743.

The protein belongs to the aconitase/IPM isomerase family. As to quaternary structure, monomer. [4Fe-4S] cluster serves as cofactor. Post-translationally, forms covalent cross-links mediated by transglutaminase TGM2, between a glutamine and the epsilon-amino group of a lysine residue, forming homopolymers and heteropolymers.

It localises to the mitochondrion. The catalysed reaction is citrate = D-threo-isocitrate. Its pathway is carbohydrate metabolism; tricarboxylic acid cycle; isocitrate from oxaloacetate: step 2/2. In terms of biological role, catalyzes the isomerization of citrate to isocitrate via cis-aconitate. This chain is Aconitate hydratase, mitochondrial (ACO2), found in Bos taurus (Bovine).